The primary structure comprises 97 residues: uncharacterized protein (97 aa).

The next 3 membrane-spanning stretches (helical) occupy residues 7–27 (CIAP…IGLG), 34–54 (IPML…LMFS), and 69–89 (IVLY…PTIL).

The protein localises to the cell membrane. This is an uncharacterized protein from Haemophilus influenzae (strain ATCC 51907 / DSM 11121 / KW20 / Rd).